We begin with the raw amino-acid sequence, 351 residues long: UDP-3-O-acylglucosamine N-acyltransferase (351 aa).

The Proton acceptor role is filled by histidine 240.

This sequence belongs to the transferase hexapeptide repeat family. LpxD subfamily. Homotrimer.

It carries out the reaction a UDP-3-O-[(3R)-3-hydroxyacyl]-alpha-D-glucosamine + a (3R)-hydroxyacyl-[ACP] = a UDP-2-N,3-O-bis[(3R)-3-hydroxyacyl]-alpha-D-glucosamine + holo-[ACP] + H(+). Its pathway is bacterial outer membrane biogenesis; LPS lipid A biosynthesis. Its function is as follows. Catalyzes the N-acylation of UDP-3-O-acylglucosamine using 3-hydroxyacyl-ACP as the acyl donor. Is involved in the biosynthesis of lipid A, a phosphorylated glycolipid that anchors the lipopolysaccharide to the outer membrane of the cell. The polypeptide is UDP-3-O-acylglucosamine N-acyltransferase (Pseudomonas syringae pv. tomato (strain ATCC BAA-871 / DC3000)).